Consider the following 211-residue polypeptide: Metalloproteinase inhibitor 3 (211 aa).

The N-terminal stretch at 1–23 is a signal peptide; that stretch reads MTPWLGLVVLLSCWSLGHWGAEA. Zn(2+) is bound at residue cysteine 24. Involved in metalloproteinase-binding stretches follow at residues 24–27 and 88–89; these read CTCS and ES. Disulfide bonds link cysteine 24–cysteine 91, cysteine 26–cysteine 118, cysteine 36–cysteine 143, cysteine 145–cysteine 192, cysteine 150–cysteine 155, and cysteine 163–cysteine 184. Residues 24–143 enclose the NTR domain; sequence CTCSPSHPQD…GLNYRYHLGC (120 aa). Residues 105–188 form a mediates interaction with EFEMP1 region; it reads TGRVYEGKMY…SKHYACIRQK (84 aa).

This sequence belongs to the protease inhibitor I35 (TIMP) family. In terms of assembly, interacts with EFEMP1. Interacts with KDR. As to expression, highest levels are found in kidney, lung and brain followed by ovary and uterus. Low levels are found in bone.

The protein localises to the secreted. It is found in the extracellular space. Its subcellular location is the extracellular matrix. Mediates a variety of processes including matrix regulation and turnover, inflammation, and angiogenesis, through reversible inhibition of zinc protease superfamily enzymes, primarily matrix metalloproteinases (MMPs). Regulates extracellular matrix (ECM) remodeling through inhibition of matrix metalloproteinases (MMP) including MMP-1, MMP-2, MMP-3, MMP-7, MMP-9, MMP-13, MMP-14 and MMP-15. Additionally, modulates the processing of amyloid precursor protein (APP) and apolipoprotein E receptor ApoER2 by inhibiting two alpha-secretases ADAM10 and ADAM17. Functions as a tumor suppressor and a potent inhibitor of angiogenesis. Exerts its anti-angiogenic effect by directly interacting with vascular endothelial growth factor (VEGF) receptor-2/KDR, preventing its binding to the VEGFA ligand. Selectively induces apoptosis in angiogenic endothelial cells through a caspase-independent cell death pathway. Mechanistically, inhibits matrix-induced focal adhesion kinase PTK2 tyrosine phosphorylation and association with paxillin/PXN and disrupts the incorporation of ITGB3, PTK2 and PXN into focal adhesion contacts on the matrix. The chain is Metalloproteinase inhibitor 3 (Timp3) from Mus musculus (Mouse).